A 219-amino-acid polypeptide reads, in one-letter code: MSDMRRLMILFLLVGLAVVLSGCATLSVHSKVNKDGSVESYKLVINTSSFVYGLLAEGAKKEGYESLRESFLSEIPEEMRDKVSYDEVWSGDQVSIIIEARDYVPADDDKVKIRKENGFLIYEDLSFASENNQTSSNELGNALLSSFSLHYYLEMPGKIVESNANVVKDNKAEWHLTGASAFNTRIYAKSEVPGIPGFEAALAIVGLLAAGLLFGRVKG.

Helical transmembrane passes span 8–28 and 194–214; these read MILFLLVGLAVVLSGCATLSV and GIPGFEAALAIVGLLAAGLLF.

It localises to the cell membrane. This is an uncharacterized protein from Archaeoglobus fulgidus (strain ATCC 49558 / DSM 4304 / JCM 9628 / NBRC 100126 / VC-16).